Consider the following 93-residue polypeptide: Small ribosomal subunit protein uS19 (93 aa).

This sequence belongs to the universal ribosomal protein uS19 family.

Protein S19 forms a complex with S13 that binds strongly to the 16S ribosomal RNA. This Lactobacillus helveticus (strain DPC 4571) protein is Small ribosomal subunit protein uS19.